The chain runs to 439 residues: Ribosomal protein uS12 methylthiotransferase RimO (439 aa).

The 116-residue stretch at 3–118 (KKFYITTLGC…AGKILREKFP (116 aa)) folds into the MTTase N-terminal domain. Residues Cys-12, Cys-48, Cys-81, Cys-157, Cys-161, and Cys-164 each contribute to the [4Fe-4S] cluster site. The region spanning 143–370 (NYSKPYAYVK…RDVHLAILEE (228 aa)) is the Radical SAM core domain. In terms of domain architecture, TRAM spans 373 to 438 (ESRIGQTYDA…EYDMNGTWIS (66 aa)).

This sequence belongs to the methylthiotransferase family. RimO subfamily. Requires [4Fe-4S] cluster as cofactor.

It is found in the cytoplasm. It carries out the reaction L-aspartate(89)-[ribosomal protein uS12]-hydrogen + (sulfur carrier)-SH + AH2 + 2 S-adenosyl-L-methionine = 3-methylsulfanyl-L-aspartate(89)-[ribosomal protein uS12]-hydrogen + (sulfur carrier)-H + 5'-deoxyadenosine + L-methionine + A + S-adenosyl-L-homocysteine + 2 H(+). In terms of biological role, catalyzes the methylthiolation of an aspartic acid residue of ribosomal protein uS12. The protein is Ribosomal protein uS12 methylthiotransferase RimO of Leptospira borgpetersenii serovar Hardjo-bovis (strain L550).